Reading from the N-terminus, the 562-residue chain is Glutamine--tRNA ligase (562 aa).

The 'HIGH' region motif lies at 35–45 (PEPNGYLHIGH). ATP contacts are provided by residues 36-38 (EPN) and 42-48 (HIGHAKS). The L-glutamine site is built by D68 and Y213. ATP is bound by residues T232 and 264-265 (RL). Residues 271–275 (ITSKR) carry the 'KMSKS' region motif.

This sequence belongs to the class-I aminoacyl-tRNA synthetase family. As to quaternary structure, monomer.

It localises to the cytoplasm. The enzyme catalyses tRNA(Gln) + L-glutamine + ATP = L-glutaminyl-tRNA(Gln) + AMP + diphosphate. This chain is Glutamine--tRNA ligase, found in Neisseria gonorrhoeae (strain ATCC 700825 / FA 1090).